The chain runs to 75 residues: Phi-liotoxin-Lw1a (75 aa).

The first 25 residues, 1–25 (MNFATKVSLLLLAIAVIVIVEGGEG), serve as a signal peptide directing secretion. Residues 26–39 (DSWFEEHEESDTER) constitute a propeptide that is removed on maturation. Cystine bridges form between cysteine 50/cysteine 62 and cysteine 56/cysteine 68.

Expressed by the venom gland.

The protein resides in the secreted. Its function is as follows. Affects the activity of both ryanodine-sensitive calcium-release channels RyR1 and RyR2 with high potency. At lower concentrations the toxin increases full openings of the RyRs, and at higher concentrations it inhibits full openings and induce openings to subconductance levels and reduces the number of full conductance openings. The different actions may be attributed to the toxins binding at different sites on the RyRs, with binding at a high-affinity site mediating the increase in full openings and the induction of subconductance states evoked upon binding to a lower-affinity site. Insect-selective toxin that provokes a dose-dependent contractile paralysis in crickets and blowfly larvae, followed by death. The chain is Phi-liotoxin-Lw1a from Hormurus waigiensis (Australian rainforest scorpion).